The sequence spans 219 residues: Ran-binding protein 1 homolog c (219 aa).

Over residues 1–11 the composition is skewed to basic and acidic residues; sequence MASTEPERENR. 2 disordered regions span residues 1 to 30 and 160 to 219; these read MAST…VAPI and QVGK…EAST. Positions 12-23 are enriched in acidic residues; the sequence is EDETEVNEDEDT. One can recognise a RanBD1 domain in the interval 26–161; sequence QVAPIVRLEE…FTEIAESQQV (136 aa). Positions 185–219 are enriched in basic and acidic residues; sequence SEEKAKEAEEKEPAKEDKETKKEKVEEEKKTEAST.

The protein resides in the nucleus. The protein localises to the nuclear pore complex. The sequence is that of Ran-binding protein 1 homolog c (RANBP1C) from Arabidopsis thaliana (Mouse-ear cress).